Here is a 226-residue protein sequence, read N- to C-terminus: UPF0502 protein azo0627 (226 aa).

The protein belongs to the UPF0502 family.

The polypeptide is UPF0502 protein azo0627 (Azoarcus sp. (strain BH72)).